A 473-amino-acid chain; its full sequence is Ribulose bisphosphate carboxylase large chain (473 aa).

Residues asparagine 116 and threonine 166 each contribute to the substrate site. Residue lysine 168 is the Proton acceptor of the active site. Lysine 170 contacts substrate. 3 residues coordinate Mg(2+): lysine 194, aspartate 196, and glutamate 197. Lysine 194 bears the N6-carboxylysine mark. The Proton acceptor role is filled by histidine 287. Substrate is bound by residues arginine 288, histidine 320, and serine 372.

Belongs to the RuBisCO large chain family. Type I subfamily. Heterohexadecamer of 8 large chains and 8 small chains. Mg(2+) serves as cofactor.

It carries out the reaction 2 (2R)-3-phosphoglycerate + 2 H(+) = D-ribulose 1,5-bisphosphate + CO2 + H2O. It catalyses the reaction D-ribulose 1,5-bisphosphate + O2 = 2-phosphoglycolate + (2R)-3-phosphoglycerate + 2 H(+). Its function is as follows. RuBisCO catalyzes two reactions: the carboxylation of D-ribulose 1,5-bisphosphate, the primary event in carbon dioxide fixation, as well as the oxidative fragmentation of the pentose substrate. Both reactions occur simultaneously and in competition at the same active site. This Halorhodospira halophila (strain DSM 244 / SL1) (Ectothiorhodospira halophila (strain DSM 244 / SL1)) protein is Ribulose bisphosphate carboxylase large chain.